A 481-amino-acid chain; its full sequence is Pentatricopeptide repeat-containing protein 8, mitochondrial (481 aa).

The N-terminal 55 residues, 1–55, are a transit peptide targeting the mitochondrion; that stretch reads MQGFGSQIFRKLLRSSNAKVSDALLQNTRTLFTAPPLHSGLQTSFTAETQQHVRQ. PPR repeat units follow at residues 137–172 and 365–399; these read SARF…EFLP and SIST…GLKP.

Its subcellular location is the mitochondrion. Functionally, mitochondrial RNA-binding protein involved in mitochondrial translation. The cox1 mRNA is one target but it is not clear if ppr8 has a single or multiple targets. The protein is Pentatricopeptide repeat-containing protein 8, mitochondrial (ppr8) of Schizosaccharomyces pombe (strain 972 / ATCC 24843) (Fission yeast).